The primary structure comprises 439 residues: Glycosyl hydrolase DigH (439 aa).

A signal peptide spans 1-27 (MDICSRNKKLTIRRPAILVALALLLCS). A lipid anchor (N-palmitoyl cysteine) is attached at cysteine 28. Residue cysteine 28 is the site of S-diacylglycerol cysteine attachment. The disordered stretch occupies residues 34 to 54 (ESMVTPPAGSKPPATTQQSSQ).

Belongs to the glycosyl hydrolase-like 10 (GHL10) family.

The protein localises to the cell outer membrane. In terms of biological role, divisome-localized glycosyl hydrolase that cleaves peptide-free (denuded) peptidoglycans. The chain is Glycosyl hydrolase DigH from Escherichia coli O157:H7.